Reading from the N-terminus, the 662-residue chain is Probable lysophospholipase 3 (662 aa).

A signal peptide spans 1–19 (MLFNCFGILALLQILPALA). 18 N-linked (GlcNAc...) asparagine glycosylation sites follow: N74, N127, N162, N196, N266, N274, N303, N376, N406, N411, N483, N518, N523, N547, N556, N574, N596, and N613. Residues 76 to 617 (TCPSDYMLRP…EQYCWNGTTV (542 aa)) enclose the PLA2c domain.

It belongs to the lysophospholipase family.

Its subcellular location is the secreted. It catalyses the reaction a 1-acyl-sn-glycero-3-phosphocholine + H2O = sn-glycerol 3-phosphocholine + a fatty acid + H(+). Its function is as follows. Catalyzes the release of fatty acids from lysophospholipids. The polypeptide is Probable lysophospholipase 3 (plb3) (Schizosaccharomyces pombe (strain 972 / ATCC 24843) (Fission yeast)).